A 349-amino-acid chain; its full sequence is Fructose-1,6-bisphosphatase class 1 (349 aa).

Mg(2+) is bound by residues Glu91, Asp110, Leu112, and Asp113. Residues 113–116 and Asn205 contribute to the substrate site; that span reads DGSS. Residue Glu277 participates in Mg(2+) binding.

It belongs to the FBPase class 1 family. As to quaternary structure, homotetramer. It depends on Mg(2+) as a cofactor.

The protein resides in the cytoplasm. The enzyme catalyses beta-D-fructose 1,6-bisphosphate + H2O = beta-D-fructose 6-phosphate + phosphate. The protein operates within carbohydrate biosynthesis; gluconeogenesis. The sequence is that of Fructose-1,6-bisphosphatase class 1 from Rhizobium meliloti (strain 1021) (Ensifer meliloti).